The sequence spans 1412 residues: MKALLDLFKQVQQEEIFDAIKIGLASPDKIRSWSFGEVKKPETINYRTFKPERDGLFCAKIFGPIKDYECLCGKYKRLKHRGVICEKCGVEVTLAKVRRERMGHIELASPVAHIWFLKSLPSRLGMVLDMTLRDIERVLYFEAYVVIDPGMTPLKARQIMTEEDYYNKVEEYGDEFRAEMGAEGVRELLRSINIDEQVETLRTELKNTGSEAKIKKYAKRLKVLEAFQRSGIKPDWMILEVLPVLPPELRPLVPLDGGRFATSDLNDLYRRVINRNNRLKRLLELKAPEIIVRNEKRMLQEAVDSLLDNGRRGKAMTGANKRPLKSLADMIKGKGGRFRQNLLGKRVDYSGRSVIVVGPTLKLHQCGLPKLMALELFKPFIFNKLEVMGVATTIKAAKKEVENQTPVVWDILEEVIREHPVMLNRAPTLHRLGIQAFEPVLIEGKAIQLHPLVCAAFNADFDGDQMAVHVPLSLEAQMEARTLMLASNNVLFPANGDPSIVPSQDIVLGLYYATREAINGKGEGLSFTGVSEVIRAYENKEVELASRVNVRITEMVRNEDTSEGAPQFVPKISLYATTVGRAILSEILPPGLPFSVLNKPLKKKEISRLINTAFRKCGLRATVVFADQLMQSGFRLATRAGISICVDDMLVPTQKETIVGDAAKKVKEYDRQYMSGLVTAQERYNNVVDIWSATSEAVGKAMMEQLSTEPVIDRGGNETRQESFNSIYMMADSGARGSAVQIRQLAGMRGLMAKPDGSIIETPITANFREGLNVLQYFISTHGARKGLADTALKTANSGYLTRRLVDVTQDLVVVEDDCGTSNGVAMKALVEGGEVVEALRDRILGRVAASDVVNPETQETLYEAGALLDETAVEDIERLGIDEVRVRTALTCETRYGLCASCYGRDLGRGSLVNVGEAVGVIAAQSIGEPGTQLTMRTFHIGGAASRAAVASSVEAKSNGTVRFTASMRYVTNAKGEQIVISRSGEALITDDIGRERERHKIPYGATLLQLDGAAIKAGTQLATWDPLTRPIITEYGGTVKFENVEEGVTVAKQIDDVTGLSTLVVIDVKRRGSQAAKSVRPQVKLLDANGDEVKIPGTEHAVQIGFQVGALITVKDGQQVQVGEVLARIPTESQKTRDITGGLPRVAELFEARSPKDAGILAEVTGTVSFGKDTKGKQRLVITDLEGNQHEFLIAKEKQVLVHDGQVVNKGEMIVDGPADPHDILRLQGIEALSRYIVDEVQDVYRLQGVKINDKHIEVIVRQMLRRVQIVDNGDTRFIPGEQVERSDMLDENDRMIAEDKRPATYDNILLGITKASLSTDSFISAASFQETTRVLTEAAIMGKRDDLRGLKENVIVGRLIPAGTGLAFHKARKAKEQSDRERFDQIAAEEAFEFGTPSAPAEEPQHPAE.

Zn(2+)-binding residues include C70, C72, C85, and C88. D460, D462, and D464 together coordinate Mg(2+). Zn(2+) is bound by residues C819, C893, C900, and C903. The tract at residues 1393 to 1412 (EAFEFGTPSAPAEEPQHPAE) is disordered.

Belongs to the RNA polymerase beta' chain family. As to quaternary structure, the RNAP catalytic core consists of 2 alpha, 1 beta, 1 beta' and 1 omega subunit. When a sigma factor is associated with the core the holoenzyme is formed, which can initiate transcription. Mg(2+) is required as a cofactor. It depends on Zn(2+) as a cofactor.

It carries out the reaction RNA(n) + a ribonucleoside 5'-triphosphate = RNA(n+1) + diphosphate. Its function is as follows. DNA-dependent RNA polymerase catalyzes the transcription of DNA into RNA using the four ribonucleoside triphosphates as substrates. The protein is DNA-directed RNA polymerase subunit beta' of Burkholderia mallei (strain NCTC 10229).